A 172-amino-acid polypeptide reads, in one-letter code: R-phycocyanin-1 beta chain (172 aa).

Asn-72 is modified (N4-methylasparagine). A (2R,3E)-phycocyanobilin-binding site is contributed by Cys-82. Cys-153 serves as a coordination point for (2R,3E)-phycoerythrobilin.

It belongs to the phycobiliprotein family. As to quaternary structure, heterodimer of an alpha and a beta chain. Dimers further assemble into trimers and the trimers into hexamers. The basic functional unit of phycobiliproteins is a ring-shaped hexamer formed from two back-to-back trimers contacting via the alpha chain subunits. The trimers are composed of alpha/beta subunit heterodimers arranged around a three-fold axis of symmetry. The phycoerythrins also contain a gamma subunit which is located in the center of the hexamer. Contains two covalently linked bilin chromophores.

The protein resides in the plastid. The protein localises to the chloroplast thylakoid membrane. Its function is as follows. Light-harvesting photosynthetic bile pigment-protein from the phycobiliprotein complex (phycobilisome, PBS). Phycocyanin is the major phycobiliprotein in the PBS rod. The sequence is that of R-phycocyanin-1 beta chain (rpcB) from Porphyridium purpureum (Red alga).